The primary structure comprises 215 residues: S-crystallin 2 (215 aa).

The region spanning 2 to 80 (PSYTLNYFNH…YLAREFGFHG (79 aa)) is the GST N-terminal domain. Residues 82–215 (NNMEMARVEY…YLKKRSSTEF (134 aa)) form the GST C-terminal domain.

Belongs to the GST superfamily. In terms of tissue distribution, lens.

Functionally, S-crystallins are structural components of squids and octopi eye lens. Contains relatively little if any GST activity. The polypeptide is S-crystallin 2 (Enteroctopus dofleini (North Pacific giant octopus)).